The primary structure comprises 296 residues: Phosphoribosylaminoimidazole-succinocarboxamide synthase (296 aa).

Belongs to the SAICAR synthetase family.

The catalysed reaction is 5-amino-1-(5-phospho-D-ribosyl)imidazole-4-carboxylate + L-aspartate + ATP = (2S)-2-[5-amino-1-(5-phospho-beta-D-ribosyl)imidazole-4-carboxamido]succinate + ADP + phosphate + 2 H(+). The protein operates within purine metabolism; IMP biosynthesis via de novo pathway; 5-amino-1-(5-phospho-D-ribosyl)imidazole-4-carboxamide from 5-amino-1-(5-phospho-D-ribosyl)imidazole-4-carboxylate: step 1/2. This is Phosphoribosylaminoimidazole-succinocarboxamide synthase from Geobacter sp. (strain M21).